The sequence spans 89 residues: MGFTDETVRFNLDDGDKKQISETLTAVYHSLDEKGYNPINQIVGYVLSGDPAYVPRYNDARNQIRKYERDEIVEELVRYYLQGNGIDIR.

The protein belongs to the UPF0297 family.

The sequence is that of UPF0297 protein SEQ_2150 from Streptococcus equi subsp. equi (strain 4047).